Reading from the N-terminus, the 576-residue chain is Protein NRT1/ PTR FAMILY 2.12 (576 aa).

Helical transmembrane passes span 58–78 (FNVY…GALI), 89–109 (IAYA…TACL), 130–150 (KLQL…SGGI), 176–196 (FFNW…TVVV), 203–223 (WVIG…LFFV), 329–349 (VWSA…FMVF), 364–384 (IPAA…VPIY), 406–426 (MGIG…VEGV), 441–461 (WLAL…IGLI), 475–495 (IANS…SLLV), and 522–542 (YFYY…WYCA).

It belongs to the major facilitator superfamily. Proton-dependent oligopeptide transporter (POT/PTR) (TC 2.A.17) family. In terms of tissue distribution, expressed in flowers and siliques. Expressed in vascular bundle of the siliques and in funiculus.

The protein resides in the cell membrane. Its function is as follows. Low-affinity proton-dependent nitrate transporter. Not involved in dipeptides transport. Involved in delivering nitrate for seed development. The polypeptide is Protein NRT1/ PTR FAMILY 2.12 (NPF2.12) (Arabidopsis thaliana (Mouse-ear cress)).